The chain runs to 144 residues: NADPH-dependent 7-cyano-7-deazaguanine reductase (144 aa).

A compositionally biased stretch (polar residues) spans 1 to 21 (MSQSPIQNPTSDPNAQSVQET). Residues 1–27 (MSQSPIQNPTSDPNAQSVQETSESKYG) are disordered. C61 acts as the Thioimide intermediate in catalysis. D68 functions as the Proton donor in the catalytic mechanism. Residues 83 to 85 (VEL) and 102 to 103 (HE) contribute to the substrate site.

It belongs to the GTP cyclohydrolase I family. QueF type 1 subfamily.

The protein localises to the cytoplasm. The catalysed reaction is 7-aminomethyl-7-carbaguanine + 2 NADP(+) = 7-cyano-7-deazaguanine + 2 NADPH + 3 H(+). It functions in the pathway tRNA modification; tRNA-queuosine biosynthesis. Catalyzes the NADPH-dependent reduction of 7-cyano-7-deazaguanine (preQ0) to 7-aminomethyl-7-deazaguanine (preQ1). The protein is NADPH-dependent 7-cyano-7-deazaguanine reductase of Acaryochloris marina (strain MBIC 11017).